The primary structure comprises 637 residues: ATP-dependent rRNA helicase SPB4 (637 aa).

The short motif at 10–38 is the Q motif element; the sequence is WENLRVDLEPWLKDAIRSLNYPTMTPVQA. A Helicase ATP-binding domain is found at 41-236; sequence IPLLSGNKDV…RTGMNNPVKL (196 aa). An ATP-binding site is contributed by 54–61; sequence AVTGSGKT. The DEAD box motif lies at 184–187; sequence DEAD. In terms of domain architecture, Helicase C-terminal spans 266–444; that stretch reads KLTTMLQMLR…KFQKKLRKYM (179 aa). A coiled-coil region spans residues 528–597; that stretch reads SAEKARLENL…QLEAEQERGG (70 aa). A disordered region spans residues 554 to 637; the sequence is LKVKNEAWSS…GVLQGSFDDL (84 aa). Basic and acidic residues-rich tracts occupy residues 564–576 and 583–598; these read KTEK…ERKE and EAIE…RGGL. The span at 621-630 shows a compositional bias: gly residues; it reads NGGGGGGGVL.

Belongs to the DEAD box helicase family. DDX55/SPB4 subfamily. As to quaternary structure, component of pre-60S ribosomal complexes.

It localises to the nucleus. It is found in the nucleolus. The enzyme catalyses ATP + H2O = ADP + phosphate + H(+). Its function is as follows. ATP-binding RNA helicase involved in the biogenesis of 60S ribosomal subunits. Binds 90S pre-ribosomal particles and dissociates from pre-60S ribosomal particles after processing of 27SB pre-rRNA. Required for the normal formation of 18S rRNA through the processing of pre-rRNAs at sites A0, A1 and A2, and the normal formation of 25S and 5.8S rRNAs through the processing of pre-rRNAs at sites C1 and C2. The protein is ATP-dependent rRNA helicase SPB4 of Lodderomyces elongisporus (strain ATCC 11503 / CBS 2605 / JCM 1781 / NBRC 1676 / NRRL YB-4239) (Yeast).